Here is a 613-residue protein sequence, read N- to C-terminus: DNA mismatch repair protein MutL (613 aa).

This sequence belongs to the DNA mismatch repair MutL/HexB family.

Functionally, this protein is involved in the repair of mismatches in DNA. It is required for dam-dependent methyl-directed DNA mismatch repair. May act as a 'molecular matchmaker', a protein that promotes the formation of a stable complex between two or more DNA-binding proteins in an ATP-dependent manner without itself being part of a final effector complex. This is DNA mismatch repair protein MutL from Janthinobacterium sp. (strain Marseille) (Minibacterium massiliensis).